Here is a 227-residue protein sequence, read N- to C-terminus: Ribonuclease 3 (227 aa).

An RNase III domain is found at 3–130; sequence TNAISKIIKY…LIGAIYLDGG (128 aa). Glu-43 is a Mg(2+) binding site. The active site involves Asp-47. Mg(2+)-binding residues include Asn-116 and Glu-119. The active site involves Glu-119. The region spanning 155–224 is the DRBM domain; that stretch reads DAKTILQEWA…ASLMLAKINY (70 aa).

Belongs to the ribonuclease III family. In terms of assembly, homodimer. It depends on Mg(2+) as a cofactor.

The protein resides in the cytoplasm. It catalyses the reaction Endonucleolytic cleavage to 5'-phosphomonoester.. Functionally, digests double-stranded RNA. Involved in the processing of primary rRNA transcript to yield the immediate precursors to the large and small rRNAs (23S and 16S). Processes some mRNAs, and tRNAs when they are encoded in the rRNA operon. Processes pre-crRNA and tracrRNA of type II CRISPR loci if present in the organism. This Ehrlichia ruminantium (strain Welgevonden) protein is Ribonuclease 3.